A 316-amino-acid polypeptide reads, in one-letter code: ATP synthase gamma chain (316 aa).

It belongs to the ATPase gamma chain family. As to quaternary structure, F-type ATPases have 2 components, CF(1) - the catalytic core - and CF(0) - the membrane proton channel. CF(1) has five subunits: alpha(3), beta(3), gamma(1), delta(1), epsilon(1). CF(0) has three main subunits: a, b and c.

The protein localises to the cellular thylakoid membrane. Functionally, produces ATP from ADP in the presence of a proton gradient across the membrane. The gamma chain is believed to be important in regulating ATPase activity and the flow of protons through the CF(0) complex. The sequence is that of ATP synthase gamma chain from Prochlorococcus marinus (strain NATL2A).